A 316-amino-acid polypeptide reads, in one-letter code: Glutathione synthetase (316 aa).

An ATP-grasp domain is found at 125–310; sequence KLFTAWFSDL…ITGMLMDAIE (186 aa). Residue arginine 256 is glycosylated (N-beta-linked (GlcNAc) arginine). Glutamate 281 and asparagine 283 together coordinate Mg(2+).

Belongs to the prokaryotic GSH synthase family. The cofactor is Mg(2+). Mn(2+) is required as a cofactor.

It carries out the reaction gamma-L-glutamyl-L-cysteine + glycine + ATP = glutathione + ADP + phosphate + H(+). It participates in sulfur metabolism; glutathione biosynthesis; glutathione from L-cysteine and L-glutamate: step 2/2. The chain is Glutathione synthetase from Escherichia coli O127:H6 (strain E2348/69 / EPEC).